Here is a 306-residue protein sequence, read N- to C-terminus: Ribonucleoside-diphosphate reductase small subunit (306 aa).

Fe cation-binding residues include Asp-66, Glu-96, and His-99. The active site involves Tyr-103. A helical transmembrane segment spans residues 153–173 (ILMILIEGIFFVSSFAAIAYL). The Fe cation site is built by Glu-159, Glu-193, and His-196.

This sequence belongs to the ribonucleoside diphosphate reductase small chain family. In terms of assembly, heterotetramer composed of a homodimer of the large subunit (R1) and a homodimer of the small subunit (R2). Larger multisubunit protein complex are also active, composed of (R1)n(R2)n. It depends on Fe cation as a cofactor.

Its subcellular location is the host membrane. The catalysed reaction is a 2'-deoxyribonucleoside 5'-diphosphate + [thioredoxin]-disulfide + H2O = a ribonucleoside 5'-diphosphate + [thioredoxin]-dithiol. Ribonucleoside-diphosphate reductase holoenzyme provides the precursors necessary for viral DNA synthesis. Allows virus growth in non-dividing cells, as well as reactivation from latency in infected hosts. Catalyzes the biosynthesis of deoxyribonucleotides from the corresponding ribonucleotides. This chain is Ribonucleoside-diphosphate reductase small subunit, found in Varicella-zoster virus (strain Dumas) (HHV-3).